Consider the following 175-residue polypeptide: Cytochrome c homolog (175 aa).

The Cytoplasmic segment spans residues 1–8; it reads MTGKELNK. Residues 9-29 traverse the membrane as a helical; Signal-anchor segment; that stretch reads IVAAILFASLIAMIVGFIANI. Over 30–175 the chain is Periplasmic; it reads LYKPNLHVLH…LFLKNYVHDQ (146 aa). Cys-84, Cys-87, His-88, and Met-150 together coordinate heme c.

It belongs to the cytochrome c family. Binds 1 heme c group covalently per subunit.

It localises to the cell membrane. Functionally, may be involved in electron transfer from bc1 complex to aa3. This Rickettsia prowazekii (strain Madrid E) protein is Cytochrome c homolog (cycM).